The primary structure comprises 59 residues: Large ribosomal subunit protein uL30 (59 aa).

It belongs to the universal ribosomal protein uL30 family. As to quaternary structure, part of the 50S ribosomal subunit.

The polypeptide is Large ribosomal subunit protein uL30 (Photorhabdus laumondii subsp. laumondii (strain DSM 15139 / CIP 105565 / TT01) (Photorhabdus luminescens subsp. laumondii)).